Consider the following 95-residue polypeptide: Aspartyl/glutamyl-tRNA(Asn/Gln) amidotransferase subunit C (95 aa).

The protein belongs to the GatC family. In terms of assembly, heterotrimer of A, B and C subunits.

It carries out the reaction L-glutamyl-tRNA(Gln) + L-glutamine + ATP + H2O = L-glutaminyl-tRNA(Gln) + L-glutamate + ADP + phosphate + H(+). The enzyme catalyses L-aspartyl-tRNA(Asn) + L-glutamine + ATP + H2O = L-asparaginyl-tRNA(Asn) + L-glutamate + ADP + phosphate + 2 H(+). Functionally, allows the formation of correctly charged Asn-tRNA(Asn) or Gln-tRNA(Gln) through the transamidation of misacylated Asp-tRNA(Asn) or Glu-tRNA(Gln) in organisms which lack either or both of asparaginyl-tRNA or glutaminyl-tRNA synthetases. The reaction takes place in the presence of glutamine and ATP through an activated phospho-Asp-tRNA(Asn) or phospho-Glu-tRNA(Gln). This is Aspartyl/glutamyl-tRNA(Asn/Gln) amidotransferase subunit C from Laribacter hongkongensis (strain HLHK9).